The following is a 367-amino-acid chain: D-alanine--D-alanine ligase (367 aa).

Residues 150–357 (KKLLTAAGLP…YPTLLATMVE (208 aa)) enclose the ATP-grasp domain. 178-233 (RERLGLPVFVKPSRGGSSIGVSRVTAWDALPAAIELARRHDPKVIVEAAIPGRELE) lines the ATP pocket. Mg(2+) is bound by residues Asp-312, Glu-324, and Asn-326.

It belongs to the D-alanine--D-alanine ligase family. Mg(2+) is required as a cofactor. Mn(2+) serves as cofactor.

Its subcellular location is the cytoplasm. It carries out the reaction 2 D-alanine + ATP = D-alanyl-D-alanine + ADP + phosphate + H(+). Its pathway is cell wall biogenesis; peptidoglycan biosynthesis. Cell wall formation. In Mycolicibacterium vanbaalenii (strain DSM 7251 / JCM 13017 / BCRC 16820 / KCTC 9966 / NRRL B-24157 / PYR-1) (Mycobacterium vanbaalenii), this protein is D-alanine--D-alanine ligase.